The sequence spans 432 residues: MEFYLSSDCASLARYVSKVVYLEDNDIAHIYDGELHIHCSKIGSEDFLFRTVQKLELELSKIKKGPYDNFMQKEIYEQCETTKNVMRGRVDAFTNRVVLGGLENWLTELRRAKRIIMIASKSSFHSCLAARPIFEELMEVPVNVELALDFVDRNCCIFRNDVCIFVSRSGETTDTINALNYCIKKEAVTIGVVNCSGSSISRFTHCGVHTNTGPEKGIATTKSYTSQYIALVMIALWMSEDLVSKIERRKEIIQALTIVPSQIKEVLELEPLIIELCDKKLKQHDTFLLLGRGYQFASALEGASKMKEISYVHSESILTDELGHRVLAVASDNPPIIAFATKDAFSPKIASCIDQIIERKGNPIIICNKGHKIWEQDKQKGNVVTLEVPQTVDCLQGILNVIPLQLISYWLAIKKDIGVDLPRDSAMSAPDI.

2 SIS domains span residues 105–244 (WLTE…DLVS) and 277–422 (CDKK…VDLP).

This is an uncharacterized protein from Saccharomyces cerevisiae (strain Lalvin EC1118 / Prise de mousse) (Baker's yeast).